The sequence spans 339 residues: Glycerol-3-phosphate dehydrogenase [NAD(P)+] (339 aa).

Residues Ser-14, Tyr-15, His-35, and Lys-109 each contribute to the NADPH site. Positions 109, 138, and 140 each coordinate sn-glycerol 3-phosphate. Ala-142 contacts NADPH. Residues Lys-194, Asp-247, Ser-257, Arg-258, and Asn-259 each coordinate sn-glycerol 3-phosphate. Lys-194 functions as the Proton acceptor in the catalytic mechanism. Arg-258 contacts NADPH. NADPH contacts are provided by Val-282 and Glu-284.

It belongs to the NAD-dependent glycerol-3-phosphate dehydrogenase family.

It localises to the cytoplasm. The enzyme catalyses sn-glycerol 3-phosphate + NAD(+) = dihydroxyacetone phosphate + NADH + H(+). It carries out the reaction sn-glycerol 3-phosphate + NADP(+) = dihydroxyacetone phosphate + NADPH + H(+). The protein operates within membrane lipid metabolism; glycerophospholipid metabolism. Its function is as follows. Catalyzes the reduction of the glycolytic intermediate dihydroxyacetone phosphate (DHAP) to sn-glycerol 3-phosphate (G3P), the key precursor for phospholipid synthesis. In Shewanella halifaxensis (strain HAW-EB4), this protein is Glycerol-3-phosphate dehydrogenase [NAD(P)+].